Reading from the N-terminus, the 355-residue chain is UDP-N-acetylglucosamine--N-acetylmuramyl-(pentapeptide) pyrophosphoryl-undecaprenol N-acetylglucosamine transferase (355 aa).

Residues T14–G16, N126, R162, S190, I243, A262–E267, and Q287 each bind UDP-N-acetyl-alpha-D-glucosamine.

It belongs to the glycosyltransferase 28 family. MurG subfamily.

It localises to the cell inner membrane. It catalyses the reaction di-trans,octa-cis-undecaprenyl diphospho-N-acetyl-alpha-D-muramoyl-L-alanyl-D-glutamyl-meso-2,6-diaminopimeloyl-D-alanyl-D-alanine + UDP-N-acetyl-alpha-D-glucosamine = di-trans,octa-cis-undecaprenyl diphospho-[N-acetyl-alpha-D-glucosaminyl-(1-&gt;4)]-N-acetyl-alpha-D-muramoyl-L-alanyl-D-glutamyl-meso-2,6-diaminopimeloyl-D-alanyl-D-alanine + UDP + H(+). It functions in the pathway cell wall biogenesis; peptidoglycan biosynthesis. In terms of biological role, cell wall formation. Catalyzes the transfer of a GlcNAc subunit on undecaprenyl-pyrophosphoryl-MurNAc-pentapeptide (lipid intermediate I) to form undecaprenyl-pyrophosphoryl-MurNAc-(pentapeptide)GlcNAc (lipid intermediate II). The polypeptide is UDP-N-acetylglucosamine--N-acetylmuramyl-(pentapeptide) pyrophosphoryl-undecaprenol N-acetylglucosamine transferase (Vibrio campbellii (strain ATCC BAA-1116)).